Reading from the N-terminus, the 446-residue chain is Phosphoglucosamine mutase (446 aa).

The active-site Phosphoserine intermediate is serine 100. Positions 100, 239, 241, and 243 each coordinate Mg(2+). The residue at position 100 (serine 100) is a Phosphoserine.

This sequence belongs to the phosphohexose mutase family. It depends on Mg(2+) as a cofactor. In terms of processing, activated by phosphorylation.

It catalyses the reaction alpha-D-glucosamine 1-phosphate = D-glucosamine 6-phosphate. Its function is as follows. Catalyzes the conversion of glucosamine-6-phosphate to glucosamine-1-phosphate. The sequence is that of Phosphoglucosamine mutase from Shouchella clausii (strain KSM-K16) (Alkalihalobacillus clausii).